The sequence spans 150 residues: Ribosome-binding factor A (150 aa).

The disordered stretch occupies residues 119 to 150; sequence VAERAKSAQPAGEPDPYRFDGAAAADDDEPAT.

This sequence belongs to the RbfA family. Monomer. Binds 30S ribosomal subunits, but not 50S ribosomal subunits or 70S ribosomes.

Its subcellular location is the cytoplasm. Its function is as follows. One of several proteins that assist in the late maturation steps of the functional core of the 30S ribosomal subunit. Associates with free 30S ribosomal subunits (but not with 30S subunits that are part of 70S ribosomes or polysomes). Required for efficient processing of 16S rRNA. May interact with the 5'-terminal helix region of 16S rRNA. This is Ribosome-binding factor A from Acidothermus cellulolyticus (strain ATCC 43068 / DSM 8971 / 11B).